Here is a 242-residue protein sequence, read N- to C-terminus: Type III pantothenate kinase (242 aa).

Position 6–13 (6–13) interacts with ATP; that stretch reads DIGNSVAK. Residues Tyr86 and 93 to 96 contribute to the substrate site; that span reads GMDR. The active-site Proton acceptor is the Asp95. Residue Asp116 participates in K(+) binding. Position 119 (Thr119) interacts with ATP. Thr171 serves as a coordination point for substrate.

This sequence belongs to the type III pantothenate kinase family. Homodimer. The cofactor is NH4(+). Requires K(+) as cofactor.

It is found in the cytoplasm. It catalyses the reaction (R)-pantothenate + ATP = (R)-4'-phosphopantothenate + ADP + H(+). It participates in cofactor biosynthesis; coenzyme A biosynthesis; CoA from (R)-pantothenate: step 1/5. Catalyzes the phosphorylation of pantothenate (Pan), the first step in CoA biosynthesis. This is Type III pantothenate kinase from Phocaeicola vulgatus (strain ATCC 8482 / DSM 1447 / JCM 5826 / CCUG 4940 / NBRC 14291 / NCTC 11154) (Bacteroides vulgatus).